A 420-amino-acid chain; its full sequence is Polyketide biosynthesis 3-hydroxy-3-methylglutaryl-ACP synthase PksG (420 aa).

The active-site Proton donor/acceptor is the glutamate 82. Cysteine 114 serves as the catalytic Acyl-thioester intermediate. Histidine 250 (proton donor/acceptor) is an active-site residue.

It belongs to the thiolase-like superfamily. HMG-CoA synthase family.

It is found in the cytoplasm. The enzyme catalyses 3-oxobutanoyl-[ACP] + acetyl-[ACP] + H2O = (3S)-hydroxy-3-methylglutaryl-[ACP] + holo-[ACP] + H(+). Its pathway is antibiotic biosynthesis; bacillaene biosynthesis. Involved in some intermediate steps for the synthesis of the antibiotic polyketide bacillaene which is involved in secondary metabolism. It catalyzes the aldol condensation between the acetyl group attached to the acyl-carrier-protein AcpK (Ac-AcpK) and a beta-ketothioester polyketide intermediate linked to one of the consecutive thiolation domains of PksL. The chain is Polyketide biosynthesis 3-hydroxy-3-methylglutaryl-ACP synthase PksG (pksG) from Bacillus subtilis (strain 168).